The chain runs to 426 residues: Histidine--tRNA ligase (426 aa).

It belongs to the class-II aminoacyl-tRNA synthetase family. In terms of assembly, homodimer.

Its subcellular location is the cytoplasm. It catalyses the reaction tRNA(His) + L-histidine + ATP = L-histidyl-tRNA(His) + AMP + diphosphate + H(+). The protein is Histidine--tRNA ligase of Streptococcus equi subsp. zooepidemicus (strain H70).